A 633-amino-acid chain; its full sequence is Chaperone protein HtpG (633 aa).

The segment at 1–341 is a; substrate-binding; it reads MSATSSKETL…SADLPLNVSR (341 aa). The segment at 342 to 558 is b; that stretch reads EILQSSRDID…EGDMSANLER (217 aa). Residues 559–633 are c; sequence LLKAAGQAAP…LNGLLAMLPG (75 aa).

The protein belongs to the heat shock protein 90 family. In terms of assembly, homodimer.

It localises to the cytoplasm. Molecular chaperone. Has ATPase activity. This is Chaperone protein HtpG from Thiobacillus denitrificans (strain ATCC 25259 / T1).